The following is a 145-amino-acid chain: uncharacterized protein (145 aa).

It localises to the mitochondrion. This is an uncharacterized protein from Arabidopsis thaliana (Mouse-ear cress).